The sequence spans 292 residues: uncharacterized protein (292 aa).

Residue Lys-8 forms a Glycyl lysine isopeptide (Lys-Gly) (interchain with G-Cter in SUMO2) linkage. The segment at 47-67 (TKRKMLPSSSSRMRSDGFDEE) is disordered. Residue Lys-76 forms a Glycyl lysine isopeptide (Lys-Gly) (interchain with G-Cter in SUMO2) linkage. Asn-94 bears the Phosphothreonine mark. A phosphoserine mark is found at Lys-96 and Phe-97. Positions 122-292 (ETDSDQQDIT…ERSAESSEDD (171 aa)) are disordered. Thr-123 carries the post-translational modification Phosphothreonine. A phosphoserine mark is found at Ser-125 and Asp-126. Over residues 128–140 (QDITNGKKTSPQV) the composition is skewed to polar residues. Over residues 147–173 (SRKHKKSKKSHKKKQKKRSHKKQKKSK) the composition is skewed to basic residues. Positions 180–194 (TADSSSEFSEETGAS) are enriched in polar residues. Composition is skewed to basic residues over residues 197-215 (RKGKQPHKRKKKSRKKSLK) and 247-259 (KKTKRKKREKKAH). Residues 280–292 (ATDERSAESSEDD) show a composition bias toward basic and acidic residues.

This is an uncharacterized protein from Homo sapiens (Human).